A 569-amino-acid chain; its full sequence is Falcipain-1 (569 aa).

Residues 1–35 are Cytoplasmic-facing; that stretch reads MVAIKEMKEFAFARPSLVETLNKKKKFLKKKEKRT. Residues 1–332 constitute a propeptide, activation peptide; it reads MVAIKEMKEF…KRNEKDIFSK (332 aa). Residues 36 to 56 form a helical; Signal-anchor for type II membrane protein membrane-spanning segment; that stretch reads FVLSIYAFITFIIFCIGILYF. The Lumenal segment spans residues 57–569; it reads TNKSSAHNNN…IGEEVFYPIL (513 aa). Residues N58, N98, N121, and N127 are each glycosylated (N-linked (GlcNAc...) asparagine). The tract at residues 97–118 is disordered; sequence LNESSNEEDEEKYTLNSETYNN. Disulfide bonds link C354–C395, C388–C428, and C413–C433. The active site involves C357. N-linked (GlcNAc...) asparagine glycosylation is found at N479 and N487. Cysteines 482 and 558 form a disulfide. Catalysis depends on residues H488 and N533.

It belongs to the peptidase C1 family. Contains disulfide bonds.

It is found in the membrane. It localises to the cytoplasmic granule. In terms of biological role, cysteine protease. In the mosquito midgut, required for parasite development. The chain is Falcipain-1 from Plasmodium falciparum (isolate 3D7).